The sequence spans 614 residues: Male-specific lethal 1 homolog (614 aa).

2 disordered regions span residues M1–P127 and K147–S217. Residues S66 and S126 each carry the phosphoserine modification. Positions G158–P169 are enriched in low complexity. Pro residues predominate over residues A170 to A184. A compositionally biased stretch (low complexity) spans P185–A194. Position 205 is a phosphoserine (S205). Residues S213–L282 are a coiled coil. The tract at residues K223 to Q237 is interaction with MSL2. Basic and acidic residues-rich tracts occupy residues K272–K281 and T294–C304. The segment at K272–I420 is disordered. Residue K301 forms a Glycyl lysine isopeptide (Lys-Gly) (interchain with G-Cter in SUMO2) linkage. Residues P317–K346 carry the Nuclear localization signal motif. K353 bears the N6-acetyllysine mark. Glycyl lysine isopeptide (Lys-Gly) (interchain with G-Cter in SUMO2) cross-links involve residues K365 and K378. The span at V376 to S392 shows a compositional bias: basic and acidic residues. At S393 the chain carries Phosphoserine. Over residues S393–P407 the composition is skewed to polar residues. Residue T396 is modified to Phosphothreonine. S442 is subject to Phosphoserine. Positions V472 to W591 constitute a PEHE domain. The tract at residues E496–E514 is interaction with KAT8 HAT domain. Positions K505–R519 match the Bipartite nuclear localization signal motif. The tract at residues E550 to W591 is sufficient for interaction with MSL3 MRG domain.

Belongs to the msl-1 family. In terms of assembly, component of a multisubunit histone acetyltransferase complex (MSL) at least composed of the KAT8/MOF/MYST1, MSL1/hampin, MSL2 and MSL3. Forms a MSL heterotetrameric core with MSL2. Interacts (via PEHE domain) with KAT8 (via HAT domain) and MSL3 (via MRG domain); both interactions are direct. Directly interacts with NUPR1. Interacts with TP53BP1; this interaction may be required for MSL1 DNA repair activity, but not for histone acetyltransferase activity. Interacts with TTC4, ECM2 and PIHD1. Post-translationally, sumoylated with SUMO1.

The protein localises to the nucleus. It is found in the nucleoplasm. It localises to the nucleus speckle. Non-catalytic component of the MSL histone acetyltransferase complex, a multiprotein complex that mediates the majority of histone H4 acetylation at 'Lys-16' (H4K16ac), an epigenetic mark that prevents chromatin compaction. The MSL complex is required for chromosome stability and genome integrity by maintaining homeostatic levels of H4K16ac. The MSL complex is also involved in gene dosage by promoting up-regulation of genes expressed by the X chromosome. X up-regulation is required to compensate for autosomal biallelic expression. The MSL complex also participates in gene dosage compensation by promoting expression of Tsix non-coding RNA. Within the MSL complex, acts as a scaffold to tether MSL3 and KAT8 together for enzymatic activity regulation. Greatly enhances MSL2 E3 ubiquitin ligase activity, promoting monoubiquitination of histone H2B at 'Lys-34' (H2BK34Ub). This modification in turn stimulates histone H3 methylation at 'Lys-4' (H3K4me) and 'Lys-79' (H3K79me) and leads to gene activation, including that of HOXA9 and MEIS1. The chain is Male-specific lethal 1 homolog from Homo sapiens (Human).